Consider the following 205-residue polypeptide: Regulator of G-protein signaling 4 (205 aa).

S-palmitoyl cysteine attachment occurs at residues Cys2, Cys12, and Cys95. The RGS domain occupies 62 to 178 (SLENLINHEC…LKSRFYLDLT (117 aa)).

Either Cys-2 or Cys-12 or both are palmitoylated. Post-translationally, phosphorylated by cyclic GMP-dependent protein kinase.

Functionally, inhibits signal transduction by increasing the GTPase activity of G protein alpha subunits thereby driving them into their inactive GDP-bound form. Activity on G(z)-alpha is inhibited by phosphorylation of the G-protein. Activity on G(z)-alpha and G(i)-alpha-1 is inhibited by palmitoylation of the G-protein. This Rattus norvegicus (Rat) protein is Regulator of G-protein signaling 4 (Rgs4).